Consider the following 245-residue polypeptide: Biosynthetic peptidoglycan transglycosylase (245 aa).

Residues 10–30 (FLALLFVVATLAQLWYLGQVL) form a helical membrane-spanning segment. Residues 224 to 245 (DPGTVPLPPPPEPTAPPEGNTQ) are disordered. A compositionally biased stretch (pro residues) spans 226 to 239 (GTVPLPPPPEPTAP).

The protein belongs to the glycosyltransferase 51 family.

It is found in the cell inner membrane. It carries out the reaction [GlcNAc-(1-&gt;4)-Mur2Ac(oyl-L-Ala-gamma-D-Glu-L-Lys-D-Ala-D-Ala)](n)-di-trans,octa-cis-undecaprenyl diphosphate + beta-D-GlcNAc-(1-&gt;4)-Mur2Ac(oyl-L-Ala-gamma-D-Glu-L-Lys-D-Ala-D-Ala)-di-trans,octa-cis-undecaprenyl diphosphate = [GlcNAc-(1-&gt;4)-Mur2Ac(oyl-L-Ala-gamma-D-Glu-L-Lys-D-Ala-D-Ala)](n+1)-di-trans,octa-cis-undecaprenyl diphosphate + di-trans,octa-cis-undecaprenyl diphosphate + H(+). The protein operates within cell wall biogenesis; peptidoglycan biosynthesis. In terms of biological role, peptidoglycan polymerase that catalyzes glycan chain elongation from lipid-linked precursors. This chain is Biosynthetic peptidoglycan transglycosylase, found in Alcanivorax borkumensis (strain ATCC 700651 / DSM 11573 / NCIMB 13689 / SK2).